The primary structure comprises 261 residues: MFELFTALMLGILEGITEFLPVSSTGHLLIAEHWLGSRSDFFNIVIQAGAILAITFVFRKRVWSLATGLDKYSNRDYVMKLATAFLITAVVGLAVRKANWQLPETIQPIAWALIIGGIWILIAESVAKHLPERENVTWSVAIAVGLAQVVAGVFPGTSRSASTIFLAMLLGLSKRSAAAEFSFLVGIPTMFSASSYACFELFKRGELLHENWLEVSVAFVAAMLTGFAVVKWLLGYIKNHSFAPFAYYRIALGLVLLTWLT.

Helical transmembrane passes span 38-58, 75-95, 106-126, 136-156, 181-201, 217-237, and 241-261; these read RSDF…TFVF, RDYV…GLAV, IQPI…AESV, VTWS…VFPG, FSFL…CFEL, VAFV…LGYI, and SFAP…TWLT.

The protein belongs to the UppP family.

The protein localises to the cell inner membrane. It carries out the reaction di-trans,octa-cis-undecaprenyl diphosphate + H2O = di-trans,octa-cis-undecaprenyl phosphate + phosphate + H(+). In terms of biological role, catalyzes the dephosphorylation of undecaprenyl diphosphate (UPP). Confers resistance to bacitracin. The protein is Undecaprenyl-diphosphatase of Xylella fastidiosa (strain 9a5c).